The chain runs to 335 residues: Glycerol-3-phosphate dehydrogenase [NAD(P)+] (335 aa).

Residues F11, R31, and K107 each contribute to the NADPH site. Sn-glycerol 3-phosphate is bound by residues K107 and G135. NADPH is bound at residue A139. Sn-glycerol 3-phosphate contacts are provided by K190, D245, S255, R256, and N257. K190 serves as the catalytic Proton acceptor. An NADPH-binding site is contributed by R256. 2 residues coordinate NADPH: L280 and E282.

Belongs to the NAD-dependent glycerol-3-phosphate dehydrogenase family.

The protein localises to the cytoplasm. It carries out the reaction sn-glycerol 3-phosphate + NAD(+) = dihydroxyacetone phosphate + NADH + H(+). The catalysed reaction is sn-glycerol 3-phosphate + NADP(+) = dihydroxyacetone phosphate + NADPH + H(+). It functions in the pathway membrane lipid metabolism; glycerophospholipid metabolism. Catalyzes the reduction of the glycolytic intermediate dihydroxyacetone phosphate (DHAP) to sn-glycerol 3-phosphate (G3P), the key precursor for phospholipid synthesis. The protein is Glycerol-3-phosphate dehydrogenase [NAD(P)+] of Anaplasma marginale (strain St. Maries).